A 483-amino-acid chain; its full sequence is Isocitrate dehydrogenase [NADP] (483 aa).

T74 is a binding site for NADP(+). D-threo-isocitrate-binding residues include S83, N85, R89, R99, and R121. D232 lines the Mg(2+) pocket. Residues 264 to 270 and N277 each bind NADP(+); that span reads HGSAPDI.

The protein belongs to the isocitrate and isopropylmalate dehydrogenases family. In terms of assembly, homodimer. It depends on Mg(2+) as a cofactor. The cofactor is Mn(2+).

It carries out the reaction D-threo-isocitrate + NADP(+) = 2-oxoglutarate + CO2 + NADPH. Catalyzes the oxidative decarboxylation of isocitrate to 2-oxoglutarate and carbon dioxide with the concomitant reduction of NADP(+). This chain is Isocitrate dehydrogenase [NADP] (icd), found in Rickettsia prowazekii (strain Madrid E).